The sequence spans 98 residues: Sm-like protein LSM8 (98 aa).

The 77-residue stretch at 2–78 folds into the Sm domain; sequence AATTGLETLV…IGVIGELDEE (77 aa).

The protein belongs to the snRNP Sm proteins family. In terms of assembly, component of the heptameric LSM2-LSM8 complex that forms a seven-membered ring structure with a donut shape. The LSM subunits are arranged in the order LSM8, LSM2, LSM3, LSM6, LSM5, LSM7 and LSM4. LSM8 subunit interacts only with its two neighboring subunits, LSM2 and LSM4. Interacts with the prefoldin co-chaperone subunits PFD1, PFD2, PFD3, PFD4, PFD5 and PFD6. As to expression, expressed in roots, leaves, stems, flowers and siliques.

The protein localises to the nucleus. Component of the nuclear LSM2-LSM8 complex which is involved splicing nuclear mRNAs. LSM2-LSM8 binds directly to the U6 small nuclear RNAs (snRNAs). LSM8 is essential for the formation of the nuclear LSM2-LSM8 complex involved in the accurate splicing of selected development-related mRNAs through the stabilization of the spliceosomal U6 snRNA. Plays a critical role in the regulation of development-related gene expression. The protein is Sm-like protein LSM8 of Arabidopsis thaliana (Mouse-ear cress).